We begin with the raw amino-acid sequence, 503 residues long: Portal protein (503 aa).

The interval 463–503 is disordered; the sequence is EMNQYAEMQGNLLDDEGGDDDLEEDDPNAGAAESGGAGQVS. Over residues 475-489 the composition is skewed to acidic residues; that stretch reads LDDEGGDDDLEEDDP.

This sequence belongs to the SPP1-like portal protein family. Homododecamer. Has been seen as 13-mer and 14-mer multimer in experiments, but assembles as homododecamer in vivo. Interacts with the gp7 protein. Interacts with the connector proteins gp15; this interaction occurs at the end of the packaging when the terminase complex is replaced by the connector.

It is found in the virion. Forms the portal vertex of the capsid. This portal plays critical roles in head assembly, genome packaging, neck/tail attachment, and genome ejection. The portal protein multimerizes as a single ring-shaped homododecamer arranged around a central channel. Binds to the terminase subunits to form the packaging machine. Necessary to ensure correct procapsid size during capsid assembly. Once the capsid is packaged with the DNA, the terminase complex is substituted by the connector proteins gp15. This chain is Portal protein (6), found in Bacillus phage SPP1 (Bacteriophage SPP1).